We begin with the raw amino-acid sequence, 608 residues long: Signal transduction histidine-protein kinase AtoS (608 aa).

Residues 1-15 (MHYMKWIYPRRLRNQ) are Cytoplasmic-facing. A helical transmembrane segment spans residues 16–36 (MILMAILMVIVPTLTIGYIVE). Residues 37 to 189 (TEGRSAVLSE…DIRRQAWKMD (153 aa)) lie on the Periplasmic side of the membrane. The helical transmembrane segment at 190–210 (VRIIIVLTAGLLISLLLIVLF) threads the bilayer. At 211–608 (SRRLSANIDI…PINPQGNQTV (398 aa)) the chain is on the cytoplasmic side. The 51-residue stretch at 212 to 262 (RRLSANIDIITDGLSTLAQNIPTRLPQLPGEMGQISQSVNNLAQALRETRT) folds into the HAMP domain. The PAS domain maps to 260 to 305 (TRTLNDLIIENAADGVIAIDRQGDVTTMNPAAEVITGYQRHELVGQ). The PAC domain maps to 326–382 (HGTEHVALEISFPGRDRTIELSVTTSRIHNTHGEMIGALVIFSDLTARKETQRRMAQ). Residues 395 to 602 (GVAHEVRNPL…TFTLILPINP (208 aa)) enclose the Histidine kinase domain. A Phosphohistidine; by autocatalysis modification is found at His-398.

Homodimer. In terms of processing, autophosphorylated. Each AtoS molecule may phosphorylate its partner within the dimer rather than phosphorylating itself.

It localises to the cell inner membrane. The enzyme catalyses ATP + protein L-histidine = ADP + protein N-phospho-L-histidine.. Member of the two-component regulatory system AtoS/AtoC. In the presence of acetoacetate, AtoS/AtoC stimulates the expression of the atoDAEB operon, leading to short chain fatty acid catabolism and activation of the poly-(R)-3-hydroxybutyrate (cPHB) biosynthetic pathway. Also induces the operon in response to spermidine. Involved in the regulation of motility and chemotaxis, via transcriptional induction of the flagellar regulon. AtoS is a membrane-associated kinase that phosphorylates and activates AtoC in response to environmental signals. The protein is Signal transduction histidine-protein kinase AtoS (atoS) of Escherichia coli (strain K12).